The sequence spans 248 residues: DNA repair protein RecO (248 aa).

This sequence belongs to the RecO family.

Its function is as follows. Involved in DNA repair and RecF pathway recombination. The chain is DNA repair protein RecO from Chelativorans sp. (strain BNC1).